The chain runs to 269 residues: Hydroxypyruvate/pyruvate aldolase (269 aa).

Histidine 48 acts as the Proton acceptor in catalysis. A divalent metal cation-binding residues include glutamate 152 and aspartate 178.

This sequence belongs to the HpcH/HpaI aldolase family. A divalent metal cation serves as cofactor.

It catalyses the reaction D-glyceraldehyde + pyruvate = 2-dehydro-3-deoxy-L-galactonate. Functionally, aldolase which can catalyze in vitro the aldolisation reaction between hydroxypyruvate (HPA) or pyruvate (PA) and D-glyceraldehyde (D-GA). The condensation of pyruvate and D-glyceraldehyde produces 2-dehydro-3-deoxy-L-galactonate as the major product. Has weak activity with hydroxypyruvate and D-glyceraldehyde. The chain is Hydroxypyruvate/pyruvate aldolase from Delftia acidovorans (strain DSM 14801 / SPH-1).